Reading from the N-terminus, the 396-residue chain is Anhydro-N-acetylmuramic acid kinase (396 aa).

Position 19 to 26 (19 to 26 (GTSADGID)) interacts with ATP.

Belongs to the anhydro-N-acetylmuramic acid kinase family.

It catalyses the reaction 1,6-anhydro-N-acetyl-beta-muramate + ATP + H2O = N-acetyl-D-muramate 6-phosphate + ADP + H(+). Its pathway is amino-sugar metabolism; 1,6-anhydro-N-acetylmuramate degradation. The protein operates within cell wall biogenesis; peptidoglycan recycling. Its function is as follows. Catalyzes the specific phosphorylation of 1,6-anhydro-N-acetylmuramic acid (anhMurNAc) with the simultaneous cleavage of the 1,6-anhydro ring, generating MurNAc-6-P. Is required for the utilization of anhMurNAc either imported from the medium or derived from its own cell wall murein, and thus plays a role in cell wall recycling. The protein is Anhydro-N-acetylmuramic acid kinase of Colwellia psychrerythraea (strain 34H / ATCC BAA-681) (Vibrio psychroerythus).